The primary structure comprises 273 residues: HTH-type transcriptional regulator NimR (273 aa).

The HTH araC/xylS-type domain maps to 158 to 258 (PKIRTMVEMM…GQTPGRYIAR (101 aa)). DNA-binding regions (H-T-H motif) lie at residues 178–199 (GQWAGFFAMSERNLARLIVKET) and 225–248 (VQKVAHTLGYDSTTAFITMFKKGL).

In terms of biological role, negatively regulates expression of the nimT operon and its own expression. Acts by binding to the nimR-nimT intergenic region. This Escherichia coli (strain K12) protein is HTH-type transcriptional regulator NimR.